A 47-amino-acid chain; its full sequence is PhoP/PhoQ regulator MgrB (47 aa).

The helical transmembrane segment at 6–26 (WVALVVVVLACLLLWAQVFNM) threads the bilayer.

The protein belongs to the MgrB family. In terms of assembly, may form homooligomers. Probably interacts with the periplasmic domain of PhoQ.

It is found in the cell inner membrane. In terms of biological role, phoP-regulated transcription is redox-sensitive, being activated when the periplasm becomes more reducing. MgrB acts between DsbA/DsbB and PhoP/PhoQ in this pathway. Represses PhoP/PhoQ signaling, possibly by binding to the periplasmic domain of PhoQ, altering its activity and that of downstream effector PhoP. The sequence is that of PhoP/PhoQ regulator MgrB from Escherichia coli O1:K1 / APEC.